Here is a 432-residue protein sequence, read N- to C-terminus: MPSNVPAAPITTAEVLPADELERILEAARTASTSLAASTSVQRDAALDAIAAALVSGADRIVAANAEDLAAGRDAGLAAGLLDRLTLDARRVASLADAVTGIRGLDDPLGLVVRGRTLPNGLLLSQVRVPFGVVGAIYEARPNVTVDIAALALKSGNAVVLRGGSAALRTNAVLVDVMRGALERVGLLAHAVQTVDAHGRAGAARLMRARGLVDVLVPRGSAELIRTVVAESTVPVIETGAGVVHVYLDASADARMSVDIAVDAKVSRPSVCNAMETLLVHRDAAPRVLVAVLDALRDRGVTVHGDAAVRAMWPDAVPATDEDWAAEYLSLDLAVRVVDSVEDAVAHIARWSTHHTESIVTSDLAVAERFLAAVDSAVVMVNASTRFTDGSEFGFGAEVGISTQKLHARGPMGVQELTSTKWIVRGSGQVRG.

It belongs to the gamma-glutamyl phosphate reductase family.

The protein localises to the cytoplasm. It catalyses the reaction L-glutamate 5-semialdehyde + phosphate + NADP(+) = L-glutamyl 5-phosphate + NADPH + H(+). It participates in amino-acid biosynthesis; L-proline biosynthesis; L-glutamate 5-semialdehyde from L-glutamate: step 2/2. Catalyzes the NADPH-dependent reduction of L-glutamate 5-phosphate into L-glutamate 5-semialdehyde and phosphate. The product spontaneously undergoes cyclization to form 1-pyrroline-5-carboxylate. The chain is Gamma-glutamyl phosphate reductase from Clavibacter michiganensis subsp. michiganensis (strain NCPPB 382).